The following is a 525-amino-acid chain: MLECLSALLVLFAGGGGSVLAAVQSKTVADPNLCPGYNSQLISPFLSSCKRNLSECVSRYFDEQYAFCRSCVTVNNETMEDLDNCKCLQCALSSLNNSCFHDYCTSKDEYDKLQIVVEQFQLTNGVLDDGEILKPRGNKFSSRKLSYFVGQNNTLFRNPLQFEKNQLISALLTSLTNNQKTISSVDMFEVVDANNEVQYLRKRTISGKTLSPATGYEEENDGDCSVKDKKWEGKIEYHENKKVSSENCSKDTDDKSGSKKERNTKAPLFHTATEIHMTRWSSWRPKKIFTRYLVNEYQSPKIITTVNRFYRTKTDTETGTTLITSTKAKRRWFPRTKIVTSTATSTFLSITTTTTTNAIATKSLVAVLNPDGLNKKAGINFGLFSANGELASPDEGGTPTVVRRDKISDPGAANEQATLFSTTFSQVPHLPELDSGEFISAASQLDKRIFIFTAITVSITTLMMLGFSYRSRVSFRDHSIDDSDDDNDWSDDEVEFDEEYFYSLPVSIPEKGISLDKMAQQLGVE.

The first 21 residues, 1 to 21, serve as a signal peptide directing secretion; it reads MLECLSALLVLFAGGGGSVLA. Residues 22–448 lie on the Extracellular side of the membrane; it reads AVQSKTVADP…ISAASQLDKR (427 aa). Positions 242–264 are disordered; that stretch reads KVSSENCSKDTDDKSGSKKERNT. A helical membrane pass occupies residues 449-469; it reads IFIFTAITVSITTLMMLGFSY. Over 470-525 the chain is Cytoplasmic; it reads RSRVSFRDHSIDDSDDDNDWSDDEVEFDEEYFYSLPVSIPEKGISLDKMAQQLGVE.

It localises to the membrane. This is an uncharacterized protein from Saccharomyces cerevisiae (strain YJM789) (Baker's yeast).